Consider the following 403-residue polypeptide: S-adenosylmethionine synthase (403 aa).

ATP is bound at residue His-15. Residue Asp-17 participates in Mg(2+) binding. Glu-43 lines the K(+) pocket. L-methionine is bound by residues Glu-56 and Gln-99. The tract at residues 99-109 is flexible loop; the sequence is QSPHIAQGVDR. ATP-binding positions include 166 to 168, 232 to 233, Asp-241, 247 to 248, Ala-264, and Lys-268; these read DAK, KF, and RK. Asp-241 serves as a coordination point for L-methionine. L-methionine is bound at residue Lys-272.

The protein belongs to the AdoMet synthase family. In terms of assembly, homotetramer; dimer of dimers. Requires Mg(2+) as cofactor. It depends on K(+) as a cofactor.

It is found in the cytoplasm. It carries out the reaction L-methionine + ATP + H2O = S-adenosyl-L-methionine + phosphate + diphosphate. It functions in the pathway amino-acid biosynthesis; S-adenosyl-L-methionine biosynthesis; S-adenosyl-L-methionine from L-methionine: step 1/1. In terms of biological role, catalyzes the formation of S-adenosylmethionine (AdoMet) from methionine and ATP. The overall synthetic reaction is composed of two sequential steps, AdoMet formation and the subsequent tripolyphosphate hydrolysis which occurs prior to release of AdoMet from the enzyme. The polypeptide is S-adenosylmethionine synthase (Stenotrophomonas maltophilia (strain R551-3)).